A 162-amino-acid chain; its full sequence is Dihydrofolate reductase (162 aa).

In terms of domain architecture, DHFR spans 3–161 (KITLIAACAE…TSYAFVHYLR (159 aa)). 7 to 9 (IAA) serves as a coordination point for substrate. Residues 8–9 (AA) and 16–21 (IGAGNA) each bind NADP(+). Substrate is bound at residue D29. 45-48 (GRKT) serves as a coordination point for NADP(+). R60 serves as a coordination point for substrate. NADP(+) contacts are provided by residues 65–68 (ISRQ) and 98–103 (MGGAQI). Substrate is bound at residue T117.

It belongs to the dihydrofolate reductase family.

The enzyme catalyses (6S)-5,6,7,8-tetrahydrofolate + NADP(+) = 7,8-dihydrofolate + NADPH + H(+). It participates in cofactor biosynthesis; tetrahydrofolate biosynthesis; 5,6,7,8-tetrahydrofolate from 7,8-dihydrofolate: step 1/1. Functionally, key enzyme in folate metabolism. Catalyzes an essential reaction for de novo glycine and purine synthesis, and for DNA precursor synthesis. The chain is Dihydrofolate reductase (folA) from Neisseria meningitidis serogroup A / serotype 4A (strain DSM 15465 / Z2491).